The chain runs to 250 residues: Ferritin, chloroplastic (250 aa).

Residues 1 to 49 (MALAPSKVSTFSGFSPKPSVGGAQKNPTCSVSLSFLNEKLGSRNLRVCA) constitute a chloroplast transit peptide. The segment at 50–82 (STVPLTGVIFEPFEEVKKSELAVPTAPQVSLAR) is extension peptide (EP). The region spanning 83–236 (QNYADECESA…EYVAQLRRVG (154 aa)) is the Ferritin-like diiron domain. Positions 100, 135, 138, 184, and 218 each coordinate Fe cation.

Belongs to the ferritin family. As to quaternary structure, oligomer of 24 subunits. There are two types of subunits: L (light) chain and H (heavy) chain. The major chain can be light or heavy, depending on the species and tissue type. The functional molecule forms a roughly spherical shell with a diameter of 12 nm and contains a central cavity into which the insoluble mineral iron core is deposited.

The protein localises to the plastid. It localises to the chloroplast. It catalyses the reaction 4 Fe(2+) + O2 + 4 H(+) = 4 Fe(3+) + 2 H2O. Its function is as follows. Stores iron in a soluble, non-toxic, readily available form. Important for iron homeostasis. Has ferroxidase activity. Iron is taken up in the ferrous form and deposited as ferric hydroxides after oxidation. The polypeptide is Ferritin, chloroplastic (Malus baccata var. xiaojinensis (Apple)).